A 177-amino-acid chain; its full sequence is Putative zinc finger protein 826 (177 aa).

The segment at 99–114 (KTFTWSSSPHKHRRTH) adopts a C2H2-type 1; degenerate zinc-finger fold. Residues 120–142 (YKCEECGKAFTASSTLSEYKTIH) form a C2H2-type 2; degenerate zinc finger. The segment at 148–170 (CKCEECGKAFNWSSDFNKHKRIH) adopts a C2H2-type 3 zinc-finger fold.

It is found in the nucleus. Functionally, may be involved in transcriptional regulation. This is Putative zinc finger protein 826 (ZNF826P) from Homo sapiens (Human).